The following is a 207-amino-acid chain: Small ribosomal subunit protein uS4 (207 aa).

Residues Lys-31–Tyr-52 are disordered. The 61-residue stretch at Cys-97–Val-157 folds into the S4 RNA-binding domain.

This sequence belongs to the universal ribosomal protein uS4 family. In terms of assembly, part of the 30S ribosomal subunit. Contacts protein S5. The interaction surface between S4 and S5 is involved in control of translational fidelity.

Its function is as follows. One of the primary rRNA binding proteins, it binds directly to 16S rRNA where it nucleates assembly of the body of the 30S subunit. With S5 and S12 plays an important role in translational accuracy. The sequence is that of Small ribosomal subunit protein uS4 from Acidovorax sp. (strain JS42).